The chain runs to 108 residues: Insulin (108 aa).

The first 21 residues, 1–21, serve as a signal peptide directing secretion; the sequence is MAVWLQAGALLVLLVVSSVST. Disulfide bonds link C30/C94, C42/C107, and C93/C98. The propeptide at 54–84 is c peptide; it reads DVEPLLGFLPPKSAQETEVADFAFKDHAELI.

It belongs to the insulin family. In terms of assembly, heterodimer of a B chain and an A chain linked by two disulfide bonds.

The protein localises to the secreted. Insulin decreases blood glucose concentration. It increases cell permeability to monosaccharides, amino acids and fatty acids. It accelerates glycolysis, the pentose phosphate cycle, and glycogen synthesis in liver. This is Insulin (ins) from Danio rerio (Zebrafish).